A 554-amino-acid chain; its full sequence is MGLCASKDSRESTHDGGPRVNRPGANDANRRNDVRKGAGDKKQDKKNKKAKGSIVNAASNINNSSSGKTKISTVSEDGTVSNGVGNTAEYDNANNKNNGNNNNSNNNDNNNNNNNNIGNNINGNNNNDSENIHDSNNSNIENKRYFNNINTGVLNGVNGNSTNSDKALSNQFDQSNNSETHSGTMTGISQALALNDSGVNGFDTDLAKRNGTVNASGGQSPGGSETVNALKVLLLGSGESGKSTVLQQLKILHQNGFSREELLEYKPFIFDNIIETGKDLAKARRTFNVQLEEDAEISESDLDELLSQQYQPTKLPCLPADLAKTLKILWNLQSTQDLLVSEHRSSFYLMDSASYFYENLDRISEPKYIPTITDVIRTRKKTSGIFDTMIDLDKNLKLHFFDVGGQRSERKKWIHCFDNVTLIIFCVSLSEYDQTLLEDNSQNRLEESLILFDSVVNSRWFARSSVVLFLNKIDIFAEKLRHVPLEKYFPDYTGGKDINKAAKYILWRFVQLNRANLNIYPHVTQATDTSNIKLVFAAIKETILENSLKDSGVL.

2 disordered regions span residues 1–139 and 157–183; these read MGLC…NNSN and VNGN…THSG. G2 carries N-myristoyl glycine lipidation. Residue C4 is the site of S-palmitoyl cysteine attachment. 2 stretches are compositionally biased toward basic and acidic residues: residues 7–17 and 28–43; these read KDSRESTHDGG and ANRR…DKKQ. The span at 52 to 66 shows a compositional bias: low complexity; the sequence is GSIVNAASNINNSSS. Positions 67 to 85 are enriched in polar residues; it reads GKTKISTVSEDGTVSNGVG. A compositionally biased stretch (low complexity) spans 91–139; it reads DNANNKNNGNNNNSNNNDNNNNNNNNIGNNINGNNNNDSENIHDSNNSN. One can recognise a G-alpha domain in the interval 228–554; it reads NALKVLLLGS…ENSLKDSGVL (327 aa). Positions 231 to 244 are G1 motif; the sequence is KVLLLGSGESGKST. 14 residues coordinate GTP: E239, S240, G241, K242, S243, T244, D351, I376, T382, G405, N471, K472, D474, and A526. S243 contacts Mg(2+). A G2 motif region spans residues 374–382; sequence DVIRTRKKT. T382 contacts Mg(2+). A G3 motif region spans residues 398–407; the sequence is LHFFDVGGQR. Positions 467-474 are G4 motif; the sequence is VLFLNKID. The G5 motif stretch occupies residues 524–529; the sequence is TQATDT.

This sequence belongs to the G-alpha family. In terms of assembly, g proteins are composed of 3 units; alpha, beta and gamma. The alpha chain contains the guanine nucleotide binding site. It depends on Mg(2+) as a cofactor.

In terms of biological role, guanine nucleotide-binding proteins (G proteins) are involved as modulators or transducers in various transmembrane signaling systems. This protein may be involved in the determination of the cAMP level according to nutritional conditions, most probably as a regulator of adenylyl cyclase. The chain is Guanine nucleotide-binding protein alpha-2 subunit (GPA2) from Kluyveromyces lactis (strain ATCC 8585 / CBS 2359 / DSM 70799 / NBRC 1267 / NRRL Y-1140 / WM37) (Yeast).